The primary structure comprises 427 residues: 12-alpha,13-alpha-dihydroxyfumitremorgin C prenyltransferase (427 aa).

Glutamate 94 is a substrate binding site. Arginine 105, lysine 192, tyrosine 194, tyrosine 268, glutamine 353, tyrosine 355, tyrosine 419, and tyrosine 423 together coordinate dimethylallyl diphosphate.

It belongs to the tryptophan dimethylallyltransferase family.

It carries out the reaction 12alpha,13alpha-dihydroxyfumitremorgin C + dimethylallyl diphosphate = fumitremorgin B + diphosphate. It participates in mycotoxin biosynthesis. 12-alpha,13-alpha-dihydroxyfumitremorgin C prenyltransferase; part of the gene cluster that mediates the biosynthesis of fumitremorgins, indole alkaloids that carry not only intriguing chemical structures, but also interesting biological and pharmacological activities. The biosynthesis of fumitremorgin-type alkaloids begins by condensation of the two amino acids L-tryptophan and L-proline to brevianamide F, catalyzed by the non-ribosomal peptide synthetase ftmA. Brevianamide F is then prenylated by the prenyltransferase ftmPT1/ftmB in the presence of dimethylallyl diphosphate, resulting in the formation of tryprostatin B. The three cytochrome P450 monooxygenases, ftmP450-1/ftmC, ftmP450-2/ftmE and ftmP450-3/FtmG, are responsible for the conversion of tryprostatin B to 6-hydroxytryprostatin B, tryprostatin A to fumitremorgin C and fumitremorgin C to 12,13-dihydroxyfumitremorgin C, respectively. The putative methyltransferase ftmMT/ftmD is expected for the conversion of 6-hydroxytryprostatin B to tryprostatin A. FtmPT2/FtmH catalyzes the prenylation of 12,13-dihydroxyfumitre-morgin C in the presence of dimethylallyl diphosphate, resulting in the formation of fumitremorgin B. Fumitremorgin B is further converted to verruculogen by ftmOx1/ftmF via the insertion of an endoperoxide bond between the two prenyl moieties. In some fungal species, verruculogen is further converted to fumitremorgin A, but the enzymes involved in this step have not been identified yet. In Aspergillus fumigatus (strain ATCC MYA-4609 / CBS 101355 / FGSC A1100 / Af293) (Neosartorya fumigata), this protein is 12-alpha,13-alpha-dihydroxyfumitremorgin C prenyltransferase.